The chain runs to 412 residues: MALIVQKFGGTSVGTVERIEQVAEKVKKFRDGGDDIVVVVSAMSGETNRLIDLAKQISEQPVPRELDVMVSTGEQVTIALLAMALIKRGVPAVSYTGNQVRILTDSAHTKARILQIDAQRIQRDIKAGRVVVVAGFQGVDEKGNITTLGRGGSDTTGVALAAALKADECQIYTDVDGVYTTDPRVVAKAQRLDKITFEEMLEMASLGSKVLQIRAVEFAGKYSVPLRVLHSFQEGPGTLITLDEEESMEQPIISGIAFNRDEAKLTIRGVPDTPGVAFKILGPISAANVEVDMIVQNVAHDNTTDFTFTVHRNDYNNALQVLQGIAAEMGAREAIGDTNIAKVSIVGVGMRSHAGVASRMFEALAKENINIQMISTSEIKVSVVIEEKYLELAVRALHTAFELDAPAGNTAE.

The 68-residue stretch at 265-332 folds into the ACT domain; that stretch reads LTIRGVPDTP…QGIAAEMGAR (68 aa).

It belongs to the aspartokinase family.

Its subcellular location is the cytoplasm. It catalyses the reaction L-aspartate + ATP = 4-phospho-L-aspartate + ADP. It participates in amino-acid biosynthesis; L-lysine biosynthesis via DAP pathway; (S)-tetrahydrodipicolinate from L-aspartate: step 1/4. The protein operates within amino-acid biosynthesis; L-methionine biosynthesis via de novo pathway; L-homoserine from L-aspartate: step 1/3. Its pathway is amino-acid biosynthesis; L-threonine biosynthesis; L-threonine from L-aspartate: step 1/5. With respect to regulation, allosterically and strongly feedback inhibited by tryptophan. Addition of lysine alone slightly enhances activity. The simultaneous addition of lysine and tryptophan leads to very strong feedback inhibition of the enzyme. The feedback control by tryptophan is reduced in the presence of the compatible solutes hydroxyectoine or ectoine. Its function is as follows. Involved in the biosynthesis of L-aspartate-beta-semialdehyde which is a central intermediate in the biosynthesis of different amino acids (L-lysine, L-methionine, L-threonine). Catalyzes the phosphorylation of the beta-carboxyl group of L-aspartate to yield 4-phospho-L-aspartate. The chain is Aspartate kinase Ask_LysC (lysC) from Stutzerimonas stutzeri (strain A1501) (Pseudomonas stutzeri).